Here is a 366-residue protein sequence, read N- to C-terminus: MGKIDFRLEKTFGYTTGACAAAGAYSALYFLKNNERLNFVEIVNLKEDSLIIPIKNIEKQGDTAISTVEKFSGEDIDITNGMDIEIEVTLNLDNNSSESSNVDIIGGIGVGIITKSGLQVTLGKPAINPKPREMIETNLKSLLTDNECVTVKISVPNGDEIAKKTLNPKLGIIGGISILGTTGIVRPMSNDAYKESLAPQIDVALANNFENLIFVPGNIGTKHAKILLHAEEDQIIEVSNFWDYMLNKAKEKGVKDITVFGHAGKIVKLAGGIFDTHSKVADARNEILCAYTSLVTQDVEILQKILQSNTTEDIVEILTEKGILKEVFDNVSKRVVERLSSRWDGINFSCIIINMKGNMLGKYDQG.

This sequence belongs to the CbiD family.

The enzyme catalyses Co-precorrin-5B + S-adenosyl-L-methionine = Co-precorrin-6A + S-adenosyl-L-homocysteine. It participates in cofactor biosynthesis; adenosylcobalamin biosynthesis; cob(II)yrinate a,c-diamide from sirohydrochlorin (anaerobic route): step 6/10. Catalyzes the methylation of C-1 in cobalt-precorrin-5B to form cobalt-precorrin-6A. This is Cobalt-precorrin-5B C(1)-methyltransferase from Methanococcus maripaludis (strain C7 / ATCC BAA-1331).